Here is a 657-residue protein sequence, read N- to C-terminus: Acetyl-coenzyme A synthetase (657 aa).

CoA is bound by residues 192-195 (RRGK) and Thr311. ATP is bound by residues 387 to 389 (GEP), 411 to 416 (DTWWQT), Asp504, Arg519, and Arg530. Residues His543 and Val546 each coordinate Mg(2+). Residue Arg592 participates in CoA binding. Residue Lys617 is modified to N6-acetyllysine.

It belongs to the ATP-dependent AMP-binding enzyme family. It depends on Mg(2+) as a cofactor. Acetylated. Deacetylation by the SIR2-homolog deacetylase activates the enzyme.

It carries out the reaction acetate + ATP + CoA = acetyl-CoA + AMP + diphosphate. Functionally, catalyzes the conversion of acetate into acetyl-CoA (AcCoA), an essential intermediate at the junction of anabolic and catabolic pathways. AcsA undergoes a two-step reaction. In the first half reaction, AcsA combines acetate with ATP to form acetyl-adenylate (AcAMP) intermediate. In the second half reaction, it can then transfer the acetyl group from AcAMP to the sulfhydryl group of CoA, forming the product AcCoA. This Campylobacter jejuni subsp. jejuni serotype O:2 (strain ATCC 700819 / NCTC 11168) protein is Acetyl-coenzyme A synthetase.